Consider the following 324-residue polypeptide: NADH-quinone oxidoreductase subunit H (324 aa).

8 consecutive transmembrane segments (helical) span residues 11-31, 81-101, 114-134, 154-174, 186-206, 237-257, 264-284, and 304-324; these read ILIT…CGAF, VIFT…FAIV, IGIL…LFAG, VSYE…AGSF, LWNV…GVAV, FFVG…TLFF, ILPP…MFIL, and VCLP…LYNA.

This sequence belongs to the complex I subunit 1 family. As to quaternary structure, NDH-1 is composed of 13 different subunits. Subunits NuoA, H, J, K, L, M, N constitute the membrane sector of the complex.

It is found in the cell inner membrane. It catalyses the reaction a quinone + NADH + 5 H(+)(in) = a quinol + NAD(+) + 4 H(+)(out). In terms of biological role, NDH-1 shuttles electrons from NADH, via FMN and iron-sulfur (Fe-S) centers, to quinones in the respiratory chain. The immediate electron acceptor for the enzyme in this species is believed to be ubiquinone. Couples the redox reaction to proton translocation (for every two electrons transferred, four hydrogen ions are translocated across the cytoplasmic membrane), and thus conserves the redox energy in a proton gradient. This subunit may bind ubiquinone. This is NADH-quinone oxidoreductase subunit H from Pectobacterium carotovorum subsp. carotovorum (strain PC1).